The sequence spans 189 residues: Peptidyl-tRNA hydrolase (189 aa).

Tyrosine 14 lines the tRNA pocket. The Proton acceptor role is filled by histidine 19. TRNA contacts are provided by phenylalanine 64, asparagine 66, and asparagine 112.

This sequence belongs to the PTH family. As to quaternary structure, monomer.

It localises to the cytoplasm. The catalysed reaction is an N-acyl-L-alpha-aminoacyl-tRNA + H2O = an N-acyl-L-amino acid + a tRNA + H(+). Its function is as follows. Hydrolyzes ribosome-free peptidyl-tRNAs (with 1 or more amino acids incorporated), which drop off the ribosome during protein synthesis, or as a result of ribosome stalling. In terms of biological role, catalyzes the release of premature peptidyl moieties from peptidyl-tRNA molecules trapped in stalled 50S ribosomal subunits, and thus maintains levels of free tRNAs and 50S ribosomes. This chain is Peptidyl-tRNA hydrolase, found in Erythrobacter litoralis (strain HTCC2594).